The chain runs to 338 residues: Anthranilate phosphoribosyltransferase (338 aa).

5-phospho-alpha-D-ribose 1-diphosphate contacts are provided by residues G81, 84 to 85, S89, 91 to 94, 109 to 117, and A121; these read GD, NVST, and KHGNRALSS. G81 provides a ligand contact to anthranilate. A Mg(2+)-binding site is contributed by S93. N112 serves as a coordination point for anthranilate. R167 contacts anthranilate. Mg(2+) contacts are provided by D226 and E227.

The protein belongs to the anthranilate phosphoribosyltransferase family. As to quaternary structure, homodimer. Requires Mg(2+) as cofactor.

It catalyses the reaction N-(5-phospho-beta-D-ribosyl)anthranilate + diphosphate = 5-phospho-alpha-D-ribose 1-diphosphate + anthranilate. It functions in the pathway amino-acid biosynthesis; L-tryptophan biosynthesis; L-tryptophan from chorismate: step 2/5. Its function is as follows. Catalyzes the transfer of the phosphoribosyl group of 5-phosphorylribose-1-pyrophosphate (PRPP) to anthranilate to yield N-(5'-phosphoribosyl)-anthranilate (PRA). This Rhodopseudomonas palustris (strain ATCC BAA-98 / CGA009) protein is Anthranilate phosphoribosyltransferase.